Consider the following 433-residue polypeptide: O-methyltransferase VdtC (433 aa).

Asp-284 provides a ligand contact to S-adenosyl-L-methionine. His-335 functions as the Proton acceptor in the catalytic mechanism.

This sequence belongs to the class I-like SAM-binding methyltransferase superfamily. Cation-independent O-methyltransferase family. COMT subfamily.

The catalysed reaction is 7,9,10-trihydroxy-3-(2-oxopropyl)-1H-benzo[g]isochromen-1-one + S-adenosyl-L-methionine = 9,10-dihydroxy-7-methoxy-3-(2-oxopropyl)-1H-benzo[g]isochromen-1-one + S-adenosyl-L-homocysteine + H(+). The protein operates within secondary metabolite biosynthesis. Its function is as follows. O-methyltransferase; part of the gene cluster that mediates the biosynthesis of viriditoxin, one of the 'classical' secondary metabolites produced by fungi and that has antibacterial activity. The first step is performed by the polyketide synthase VdtA which condenses one acetyl-CoA and 6 malonyl-CoA units to form the heptaketide monomer backbone of viriditoxin. The product of VdtA is then O-methylated on C7 by the O-methyltransferase VdtC. The O-methyl group is important for the stereoselective coupling of the monomers at the final step of viriditoxin biosynthesis. The short-chain dehydrogenase/reductase VdtF then acts as a stereospecific reductase converting the pyrone to dihydropyrone via the reduction of the C3-C4 double bond. The FAD-binding monooxygenase VdtE then converts the ketone group into a methyl-ester group to yield semi-viriditoxin. Finally, the laccase VdtB is involved in dimerization of 2 semi-viriditoxin molecules to yield the final viriditoxin. VdtB is responsible for the regioselective 6,6'-coupling of semi-viriditoxin, which yields (M)-viriditoxin and (P)-viriditoxin at a ratio of 1:2. The non-catalytic carboxylesterase-like protein VdtD affects the stereochemistical outcome of the coupling. The highly reducing polyketide synthase VdtX is not involved in viriditoxin synthesis, but might possibly play a role in the production of additional metabolites not identified yet. This Byssochlamys spectabilis (Paecilomyces variotii) protein is O-methyltransferase VdtC.